Reading from the N-terminus, the 421-residue chain is Tol-Pal system protein TolB (421 aa).

Positions 1-16 (MRILVFLWLGLSSLFA) are cleaved as a signal peptide.

Belongs to the TolB family. In terms of assembly, the Tol-Pal system is composed of five core proteins: the inner membrane proteins TolA, TolQ and TolR, the periplasmic protein TolB and the outer membrane protein Pal. They form a network linking the inner and outer membranes and the peptidoglycan layer.

The protein resides in the periplasm. In terms of biological role, part of the Tol-Pal system, which plays a role in outer membrane invagination during cell division and is important for maintaining outer membrane integrity. The chain is Tol-Pal system protein TolB from Wolinella succinogenes (strain ATCC 29543 / DSM 1740 / CCUG 13145 / JCM 31913 / LMG 7466 / NCTC 11488 / FDC 602W) (Vibrio succinogenes).